Here is a 252-residue protein sequence, read N- to C-terminus: Neurexophilin-3 (252 aa).

A signal peptide spans 1–22; the sequence is MQLTRCCFVFLVQGSLYLVICG. Residues 23-75 form an II region; the sequence is QDDGPPGSEDPEHDDHEGQPRPRVPRKRGHISPKSRPLANSTLLGLLAPPGEV. The segment at 27-59 is disordered; sequence PPGSEDPEHDDHEGQPRPRVPRKRGHISPKSRP. Residues 45–55 are compositionally biased toward basic residues; sequence RVPRKRGHISP. N-linked (GlcNAc...) asparagine glycans are attached at residues N62, N127, N137, and N143. Positions 76–157 are III; sequence WGVLGQPPNR…LVPPSKAVEF (82 aa). The segment at 158–166 is IV (linker domain); that stretch reads HQEQQIFIE. The segment at 167-252 is v (Cys-rich); sequence AKASKIFNCR…HSDTPYYPSG (86 aa).

It belongs to the neurexophilin family. May be proteolytically processed at the boundary between the N-terminal non-conserved and the central conserved domain in neuron-like cells. As to expression, highest level in brain, present also in lung, kidney and testis.

It localises to the secreted. May be signaling molecules that resemble neuropeptides. Ligand for alpha-neurexins. In Mus musculus (Mouse), this protein is Neurexophilin-3 (Nxph3).